Consider the following 505-residue polypeptide: MAPTRVTHPPDDGRGEHFRVRIEGFGVGTWDLDLKTWALDWSDTARTLLGIGQDQPASYDLFLSRLEPDDRERVESAIKRVSERGGGFDVSFRVAGTSNAGQWIRARAGLIRDEAGTARHLSGIFLDIDEEKQVEGALRTRETHLRSILHTIPDAMIVIDGHGIIQLFSTAAERLFGWSELEAIGQNVNILMPEPDRSRHDSYISRYRTTSDPHIIGIGRIVTGKRRDGTTFPMHLSIGEMQSGGEPYFTGFVRDLTEHQQTQARLQELQSELVHVSRLSAMGEMASALAHELNQPLAAISNYMKGSRRLLAGSSDPNTPKVESALDRAAEQALRAGQIIRRLRDFVARGESEKRVESLSKLIEEAGALGLAGAREQNVQLRFSLDPGADLVLADRVQIQQVLVNLFRNALEAMAQSQRRELVVTNTPAADDMIEVEVSDTGSGFQDDVIPNLFQTFFTTKDTGMGVGLSISRSIIEAHGGRMWAESNASGGATFRFTLPAADEN.

The PAS 1 domain maps to 14–85 (RGEHFRVRIE…SAIKRVSERG (72 aa)). The PAC 1 domain maps to 88–140 (FDVSFRVAGTSNAGQWIRARAGLIRDEAGTARHLSGIFLDIDEEKQVEGALRT). Residues 141 to 208 (RETHLRSILH…RHDSYISRYR (68 aa)) form the PAS 2 domain. H200 serves as a coordination point for heme. The region spanning 209 to 268 (TTSDPHIIGIGRIVTGKRRDGTTFPMHLSIGEMQSGGEPYFTGFVRDLTEHQQTQARLQE) is the PAC 2 domain. One can recognise a Histidine kinase domain in the interval 288-503 (ALAHELNQPL…TFRFTLPAAD (216 aa)). At H291 the chain carries Phosphohistidine; by autocatalysis.

It depends on heme as a cofactor.

It carries out the reaction ATP + protein L-histidine = ADP + protein N-phospho-L-histidine.. The heme moiety regulates the kinase activity. In terms of biological role, putative oxygen sensor; modulates the activity of FixJ, a transcriptional activator of nitrogen fixation fixK gene. FixL probably acts as a kinase that phosphorylates FixJ. This Bradyrhizobium diazoefficiens (strain JCM 10833 / BCRC 13528 / IAM 13628 / NBRC 14792 / USDA 110) protein is Sensor protein FixL (fixL).